Reading from the N-terminus, the 354-residue chain is MMRSTLSLLQKCRLPNNNGSLLSFKNNQVVNQTALFSMKSNQQYRFYSTDVKDLAPLIKELRNRTSAPLKDCKEALIQNKNDIEKATSWLHEKGKSTANKFADRAVVEGTISIVVNNGKAVILEMNSETDFVSRGETFRALADQISRATLESNLLAQSLAEIKPDTIAPQPASGSTVADLIVGTVAKLRENIRLRRVHAIDASNQPNTIVAGYAHDPSGTNQFGRLGSLVQLQYEGGQPDIAALNQLARNIAVHIVGVGPSYVSIESVPKVLLDEAIANKRHPNSLYDEVVLLEQKYISGEDNETVKAAVQRISKQLKTNITIKSFVRYSVGEGMEKKVENYGAEVMEKINKAK.

Residues 1–47 (MMRSTLSLLQKCRLPNNNGSLLSFKNNQVVNQTALFSMKSNQQYRFY) constitute a mitochondrion transit peptide.

This sequence belongs to the EF-Ts family.

The protein resides in the mitochondrion. In terms of biological role, associates with the EF-Tu.GDP complex and induces the exchange of GDP to GTP. It remains bound to the aminoacyl-tRNA.EF-Tu.GTP complex up to the GTP hydrolysis stage on the ribosome. The polypeptide is Elongation factor Ts, mitochondrial (tsfm) (Heterostelium pallidum (strain ATCC 26659 / Pp 5 / PN500) (Cellular slime mold)).